Consider the following 632-residue polypeptide: CREB-regulated transcription coactivator 3 (632 aa).

At Ser-66 the chain carries Phosphoserine. Positions Asn-105–Val-115 are enriched in basic residues. The interval Asn-105–Ser-156 is disordered. A Phosphoserine modification is found at Ser-133. Position 145 is a phosphoserine; by SIK2 (Ser-145). Residues Ser-145–Ser-156 show a composition bias toward low complexity. Residue Thr-151 is modified to Phosphothreonine. The residue at position 293 (Ser-293) is a Phosphoserine. Positions Gly-310–Asn-338 are enriched in polar residues. The tract at residues Gly-310–Pro-455 is disordered. A compositionally biased stretch (low complexity) spans Pro-339 to Leu-360. Residues Ser-372 and Ser-391 each carry the phosphoserine modification. The span at Ser-372 to Val-405 shows a compositional bias: polar residues. Residues Ser-413–Pro-424 are compositionally biased toward pro residues. Over residues Leu-425 to Gln-440 the composition is skewed to low complexity. Ser-556 carries the post-translational modification Phosphoserine.

It belongs to the TORC family. In terms of assembly, binding, as a tetramer, through its N-terminal region, with the bZIP domain of creb1 enhances recruitment of taf4 to the promoter. 'Arg-300' in the bZIP domain of creb1 is essential for this interaction.

The protein localises to the nucleus. The protein resides in the cytoplasm. Its function is as follows. Transcriptional coactivator for creb1 which activates transcription through both consensus and variant cAMP response element (CRE) sites. Acts as a coactivator, in the SIK/TORC signaling pathway, being active when dephosphorylated and acts independently of creb1 'Ser-119' phosphorylation. Enhances the interaction of creb1 with taf4. Regulates the expression of specific CREB-activated genes such as the steroidogenic gene, StAR. Potent coactivator of ppargc1a and inducer of mitochondrial biogenesis in muscle cells. The chain is CREB-regulated transcription coactivator 3 (crtc3) from Xenopus laevis (African clawed frog).